Reading from the N-terminus, the 383-residue chain is Protein arginine N-methyltransferase PRMT10 (383 aa).

Residues 1 to 23 are disordered; it reads MRSSQNGGAMGGRAAGTGGGGPS. Over residues 8–22 the composition is skewed to gly residues; it reads GAMGGRAAGTGGGGP. An SAM-dependent MTase PRMT-type domain is found at 29–360; sequence EVDYAQYFCT…KENHRLMEIE (332 aa). S-adenosyl-L-methionine-binding residues include Gln45, Arg54, Gly78, Glu100, and Glu129. Active-site residues include Glu143 and Glu152. Residues 190–230 form a dimerization arm region; that stretch reads DRKRNDFDGAMADWHNFSDEIKSYYGVDMGVLTKPFAEEQE.

This sequence belongs to the class I-like SAM-binding methyltransferase superfamily. Protein arginine N-methyltransferase family. Ring-like homodimer.

It catalyses the reaction L-arginyl-[protein] + 2 S-adenosyl-L-methionine = N(omega),N(omega)-dimethyl-L-arginyl-[protein] + 2 S-adenosyl-L-homocysteine + 2 H(+). Its function is as follows. Methylates (mono and asymmetric dimethylation) the guanidino nitrogens of arginyl residues in some proteins. Essential for regulating flowering time. This is Protein arginine N-methyltransferase PRMT10 (PRMT10) from Arabidopsis thaliana (Mouse-ear cress).